An 88-amino-acid polypeptide reads, in one-letter code: Protein WIR1A (88 aa).

Over 1 to 13 the chain is Cytoplasmic; sequence MASLGSSAGGRRP. The chain crosses the membrane as a helical span at residues 14–35; the sequence is TVLLQIALFVVVAAIIINSSVC. The Extracellular segment spans residues 36 to 88; sequence LGATAVHDAAASGTGALDPNVPAVPTPGGAGQPYTGRGCRTVYGCRPPAGGQP.

It is found in the membrane. In terms of biological role, associated with pathogen defense. This chain is Protein WIR1A (WIR1A), found in Triticum aestivum (Wheat).